The chain runs to 248 residues: Meiotically up-regulated gene 110 protein (248 aa).

Residues 23–43 (LRFVFWFSVLIPIFFIALIII) form a helical membrane-spanning segment.

Its subcellular location is the membrane. Has a role in meiosis. In Schizosaccharomyces pombe (strain 972 / ATCC 24843) (Fission yeast), this protein is Meiotically up-regulated gene 110 protein (mug110).